Here is a 338-residue protein sequence, read N- to C-terminus: Holliday junction branch migration complex subunit RuvB (338 aa).

Residues 1 to 181 (MEERILTQNF…FGVINRLDYY (181 aa)) are large ATPase domain (RuvB-L). Residues L20, R21, G62, K65, T66, T67, 128–130 (EDF), R171, Y181, and R218 each bind ATP. T66 is a binding site for Mg(2+). The interval 182 to 252 (SVEELKEIIK…TANIALNMLG (71 aa)) is small ATPAse domain (RuvB-S). Residues 255-338 (EMGLEEIDRK…YVEQRRIEDV (84 aa)) form a head domain (RuvB-H) region. DNA contacts are provided by R310 and R315.

The protein belongs to the RuvB family. As to quaternary structure, homohexamer. Forms an RuvA(8)-RuvB(12)-Holliday junction (HJ) complex. HJ DNA is sandwiched between 2 RuvA tetramers; dsDNA enters through RuvA and exits via RuvB. An RuvB hexamer assembles on each DNA strand where it exits the tetramer. Each RuvB hexamer is contacted by two RuvA subunits (via domain III) on 2 adjacent RuvB subunits; this complex drives branch migration. In the full resolvosome a probable DNA-RuvA(4)-RuvB(12)-RuvC(2) complex forms which resolves the HJ.

The protein resides in the cytoplasm. It carries out the reaction ATP + H2O = ADP + phosphate + H(+). In terms of biological role, the RuvA-RuvB-RuvC complex processes Holliday junction (HJ) DNA during genetic recombination and DNA repair, while the RuvA-RuvB complex plays an important role in the rescue of blocked DNA replication forks via replication fork reversal (RFR). RuvA specifically binds to HJ cruciform DNA, conferring on it an open structure. The RuvB hexamer acts as an ATP-dependent pump, pulling dsDNA into and through the RuvAB complex. RuvB forms 2 homohexamers on either side of HJ DNA bound by 1 or 2 RuvA tetramers; 4 subunits per hexamer contact DNA at a time. Coordinated motions by a converter formed by DNA-disengaged RuvB subunits stimulates ATP hydrolysis and nucleotide exchange. Immobilization of the converter enables RuvB to convert the ATP-contained energy into a lever motion, pulling 2 nucleotides of DNA out of the RuvA tetramer per ATP hydrolyzed, thus driving DNA branch migration. The RuvB motors rotate together with the DNA substrate, which together with the progressing nucleotide cycle form the mechanistic basis for DNA recombination by continuous HJ branch migration. Branch migration allows RuvC to scan DNA until it finds its consensus sequence, where it cleaves and resolves cruciform DNA. The protein is Holliday junction branch migration complex subunit RuvB of Caldanaerobacter subterraneus subsp. tengcongensis (strain DSM 15242 / JCM 11007 / NBRC 100824 / MB4) (Thermoanaerobacter tengcongensis).